Consider the following 551-residue polypeptide: Calcium-dependent protein kinase 19 (551 aa).

A lipid anchor (N-myristoyl glycine) is attached at G2. The tract at residues 12 to 46 (VKKPTPDISGEQNTEVKSREITPKEQPRQRQPAPR) is disordered. The segment covering 25 to 39 (TEVKSREITPKEQPR) has biased composition (basic and acidic residues). The region spanning 98–357 (YSLGRELGRG…AAQVLEHPWI (260 aa)) is the Protein kinase domain. Residues 104–112 (LGRGQFGIT) and K127 contribute to the ATP site. Catalysis depends on D222, which acts as the Proton acceptor. Phosphoserine is present on S263. An autoinhibitory domain region spans residues 363-393 (ASDKPIDSAVLSRMKQLRAMNKLKKLAFKFI). EF-hand domains lie at 400–435 (EELK…LGSR), 436–471 (LTET…RFRV), 472–507 (ERED…YNMG), and 512–542 (IKEI…CSQS). 19 residues coordinate Ca(2+): D413, D415, S417, T419, E424, D449, D451, N453, T455, E460, D485, D487, S489, E496, D520, D522, D524, S526, and E531.

This sequence belongs to the protein kinase superfamily. Ser/Thr protein kinase family. CDPK subfamily.

Its subcellular location is the membrane. It catalyses the reaction L-seryl-[protein] + ATP = O-phospho-L-seryl-[protein] + ADP + H(+). The catalysed reaction is L-threonyl-[protein] + ATP = O-phospho-L-threonyl-[protein] + ADP + H(+). Activated by calcium. Autophosphorylation may play an important role in the regulation of the kinase activity. Functionally, may play a role in signal transduction pathways that involve calcium as a second messenger. The sequence is that of Calcium-dependent protein kinase 19 (CPK19) from Arabidopsis thaliana (Mouse-ear cress).